Reading from the N-terminus, the 87-residue chain is Small ribosomal subunit protein bS20 (87 aa).

The disordered stretch occupies residues 1–29 (MANTAQARKRARQAVKQNAHNSSQRSTLR). Over residues 20-29 (HNSSQRSTLR) the composition is skewed to polar residues.

It belongs to the bacterial ribosomal protein bS20 family.

In terms of biological role, binds directly to 16S ribosomal RNA. This is Small ribosomal subunit protein bS20 from Herminiimonas arsenicoxydans.